The chain runs to 224 residues: PKHD-type hydroxylase Sbal195_0750 (224 aa).

The Fe2OG dioxygenase domain occupies 78 to 176 (QFYPPLFNRY…RTAAFMWLQS (99 aa)). Residues histidine 96, aspartate 98, and histidine 157 each contribute to the Fe cation site. Arginine 167 contributes to the 2-oxoglutarate binding site.

Requires Fe(2+) as cofactor. The cofactor is L-ascorbate.

This chain is PKHD-type hydroxylase Sbal195_0750, found in Shewanella baltica (strain OS195).